Here is a 316-residue protein sequence, read N- to C-terminus: Transaldolase 2 (316 aa).

K131 functions as the Schiff-base intermediate with substrate in the catalytic mechanism.

Belongs to the transaldolase family. Type 1 subfamily. As to quaternary structure, homodimer.

Its subcellular location is the cytoplasm. It catalyses the reaction D-sedoheptulose 7-phosphate + D-glyceraldehyde 3-phosphate = D-erythrose 4-phosphate + beta-D-fructose 6-phosphate. It functions in the pathway carbohydrate degradation; pentose phosphate pathway; D-glyceraldehyde 3-phosphate and beta-D-fructose 6-phosphate from D-ribose 5-phosphate and D-xylulose 5-phosphate (non-oxidative stage): step 2/3. Its function is as follows. Transaldolase is important for the balance of metabolites in the pentose-phosphate pathway. This chain is Transaldolase 2, found in Salmonella paratyphi A (strain ATCC 9150 / SARB42).